The chain runs to 89 residues: MTEAKKSLKRTLIGKVVSDKRAKTVTVMVERRVKHPIYDKIMIKSSKYHAHDEQGEYKLGDVVEITESRPLSKTKNWVATRLVQKAALV.

Belongs to the universal ribosomal protein uS17 family. As to quaternary structure, part of the 30S ribosomal subunit.

In terms of biological role, one of the primary rRNA binding proteins, it binds specifically to the 5'-end of 16S ribosomal RNA. The chain is Small ribosomal subunit protein uS17 from Delftia acidovorans (strain DSM 14801 / SPH-1).